A 74-amino-acid chain; its full sequence is Protein F9 homolog (74 aa).

Over 1–34 the chain is Virion surface; sequence GHAAANCALARVATALTRRVPASRHGLAEGGTPP. Residues 35–55 traverse the membrane as a helical segment; the sequence is WTLLLAVAAVAVLGVVAISLL. Over 56–73 the chain is Intravirion; sequence RRALRIRFRYSKSIQTLR.

It belongs to the chordopoxvirinae L1 protein family.

It is found in the virion membrane. The chain is Protein F9 homolog from Capra hircus (Goat).